The sequence spans 659 residues: Crossover junction endonuclease MUS81 (659 aa).

Residues Lys-59 to Tyr-78 carry the Helix-hairpin-helix motif 1 motif. Positions Ile-404–Asp-503 constitute an ERCC4 domain. The Helix-hairpin-helix motif 2 motif lies at Thr-585–Tyr-622.

Belongs to the XPF family. Forms a heterodimer with EME1A or EME1B. The cofactor is Mg(2+). Ca(2+) serves as cofactor. Ubiquitous but preferentially expressed in young flowers buds, notably in anthers.

The protein resides in the nucleus. The protein localises to the nucleolus. Functionally, interacts with EME1 to form a DNA structure-specific endonuclease with substrate preference for branched DNA structures with a 5'-end at the branch nick. Typical substrates include 3'-flap structures, D-loops, replication forks, nicked Holliday junctions and also intact Holliday junctions with a reduced efficiency. May be required in mitosis for the processing of stalled or collapsed replication fork intermediates. Plays a role in DNA repair and in genotoxic stress-induced homologous recombination (HR) in somatic cells. Mediates a subset of meiotic recombination events that are insensitive to crossover interference. Together with SEND1, essential for the resolution of toxic replication structures to ensure genome stability, and to maintain telomere integrity and replication. The protein is Crossover junction endonuclease MUS81 of Arabidopsis thaliana (Mouse-ear cress).